We begin with the raw amino-acid sequence, 515 residues long: MDLSLIQGMSLPLYFLLTLFFFFFATAKTRRSSSTGTLPPGPPILPLVGNIFQLGFNPHRSLAAFSKTYGPIMSLKLGRLTAVVISSPEAAKEALRTHDHVMSARTFNDALRAFDHHKHSIVWIPPSARWRFLKKTITKYLLSPQNLDAIQSLRMRKVEELVSLVNEFRERGEAIDLARASFVTSFNIISNALFSVDLATYDSNSSSYEFHNTVVHLTDIAGIPNVGDYFQYMRFLDLQGTRKKAVLCIEKLFRVFQEFIDARLAKRFSRTEKEPKEASSIDMLDSLLDLTQQNEAELTMNDLKHLLLDVFVAGTDTNSSTMEWAMTELFRSTEKMVKAQSEIRQVIGQNGFVQESDIPSLPYLQAIVKETLRLHPAAPLIPRKSESDVQIMGFLVPKNTQVVVNVWAIGRDASVWENPMKFEPERFLLRETDVKGRDFELIPFGSGRRMCPGISMALKTMHMVLASLLYSFDWKLQNGVVPGNIDMSETFGLTLHKAKSLCAVPVKKPTISSSY.

The chain crosses the membrane as a helical span at residues 5–25 (LIQGMSLPLYFLLTLFFFFFA). Residue Cys451 coordinates heme.

Belongs to the cytochrome P450 family. Heme is required as a cofactor.

It is found in the membrane. This chain is Cytochrome P450 76C3 (CYP76C3), found in Arabidopsis thaliana (Mouse-ear cress).